A 33-amino-acid polypeptide reads, in one-letter code: Alpha-amanitin proprotein (33 aa).

Residues 1 to 10 (MSDINATRLP) constitute a propeptide that is removed on maturation. Residue Ile11 is modified to (3R,4R)-4,5-dihydroxyisoleucine; in form alpha-amanitin. Ile11 bears the (3R,4S)-4-hydroxyisoleucine; in form gamma-amanitin mark. Residues 11 to 18 (IWGIGCNP) constitute a cross-link (cyclopeptide (Ile-Pro)). Residues 12-16 (WGIGC) constitute a cross-link (2'-cysteinyl-6'-hydroxytryptophan sulfoxide (Trp-Cys)). A 4-hydroxyproline modification is found at Pro18. Positions 19–33 (SVGDEVTALLTSGEA) are excised as a propeptide.

Belongs to the MSDIN fungal toxin family. In terms of processing, processed by the macrocyclase-peptidase enzyme POPB to yield a toxic cyclic decapeptide. POPB first removes 10 residues from the N-terminus. Conformational trapping of the remaining peptide forces the enzyme to release this intermediate rather than proceed to macrocyclization. The enzyme rebinds the remaining peptide in a different conformation and catalyzes macrocyclization of the N-terminal 8 residues.

Major toxin belonging to the bicyclic octapeptides amatoxins that acts by binding non-competitively to RNA polymerase II and greatly slowing the elongation of transcripts from target promoters. This chain is Alpha-amanitin proprotein, found in Amanita fuliginea (East Asian brown death cap).